The following is a 272-amino-acid chain: MENFEVIKALFLGFVEGLTEFLPISSTGHLILFGHIIDFHSDGGRVFEVVIQLGAILAVCWLYRQKIINLIKGFFSGDVESRHFAISVLIAFSPAVIIGVLAVDFIKSVLFSPIVVAIALIVGALIIFWVESKQFEHKTDDATKITFKQALLVGLAQCVAMIPGTSRSGATIVGGMFAGLSRKAATEFSFFLAMPTMLGAATFDLIKNADVLTSDNMVNIGVGFVAAFIAALLVVKALVLFVERHTLRVFAWYRIVLGVIILIAAMFFNLSA.

Transmembrane regions (helical) follow at residues 4–24 (FEVI…FLPI), 43–63 (GGRV…CWLY), 86–106 (ISVL…VDFI), 109–129 (VLFS…IIFW), 145–165 (ITFK…IPGT), 186–206 (TEFS…FDLI), 222–242 (VGFV…VLFV), and 249–269 (VFAW…MFFN).

It belongs to the UppP family.

The protein localises to the cell inner membrane. It catalyses the reaction di-trans,octa-cis-undecaprenyl diphosphate + H2O = di-trans,octa-cis-undecaprenyl phosphate + phosphate + H(+). Catalyzes the dephosphorylation of undecaprenyl diphosphate (UPP). Confers resistance to bacitracin. The chain is Undecaprenyl-diphosphatase from Acinetobacter baumannii (strain AB307-0294).